A 145-amino-acid polypeptide reads, in one-letter code: I-leader protein (145 aa).

The protein localises to the host cytoplasm. The protein resides in the host perinuclear region. This chain is I-leader protein, found in Human adenovirus C serotype 2 (HAdV-2).